The sequence spans 767 residues: Photosystem I P700 chlorophyll a apoprotein A1 (767 aa).

A disordered region spans residues 1–22; sequence MTISPPESGEKDKKILESPVKA. The segment covering 8 to 22 has biased composition (basic and acidic residues); the sequence is SGEKDKKILESPVKA. Transmembrane regions (helical) follow at residues 76–99, 162–185, 201–225, 309–327, 368–391, 407–433, 455–477, and 558–576; these read IFSA…FHGA, LMAL…FHYH, LNHH…HIGA, VSHH…GHMY, RHAQ…HHMY, LGLF…IAMV, ALIS…LYIH, and LMIH…LILL. Residues cysteine 600 and cysteine 609 each coordinate [4Fe-4S] cluster. Transmembrane regions (helical) follow at residues 616 to 637 and 681 to 703; these read HVFL…HFSW and ISMY…MFLF. Residue histidine 692 coordinates divinylchlorophyll a'. Divinyl chlorophyll a contacts are provided by methionine 700 and tyrosine 708. Position 709 (tryptophan 709) interacts with phylloquinone. Residues 741 to 761 form a helical membrane-spanning segment; sequence AVGVTHFLVGGIATTWAFFHA.

Belongs to the PsaA/PsaB family. In terms of assembly, the PsaA/B heterodimer binds the P700 divinyl chlorophyll special pair and subsequent electron acceptors. PSI consists of a core antenna complex that captures photons, and an electron transfer chain that converts photonic excitation into a charge separation. The cyanobacterial PSI reaction center is composed of one copy each of PsaA,B,C,D,E,F,I,J,K,L,M and X, and forms trimeric complexes. Requires PSI electron transfer chain: 5 divinyl chlorophyll a, 1 divinyl chlorophyll a', 2 phylloquinones and 3 4Fe-4S clusters. PSI core antenna: 90 divinyl chlorophyll a, 22 carotenoids, 3 phospholipids and 1 galactolipid. P700 is a divinyl chlorophyll a/divinyl chlorophyll a' dimer, A0 is one or more divinyl chlorophyll a, A1 is one or both phylloquinones and FX is a shared 4Fe-4S iron-sulfur center. as cofactor.

The protein localises to the cellular thylakoid membrane. It carries out the reaction reduced [plastocyanin] + hnu + oxidized [2Fe-2S]-[ferredoxin] = oxidized [plastocyanin] + reduced [2Fe-2S]-[ferredoxin]. Functionally, psaA and PsaB bind P700, the primary electron donor of photosystem I (PSI), as well as the electron acceptors A0, A1 and FX. PSI is a plastocyanin/cytochrome c6-ferredoxin oxidoreductase, converting photonic excitation into a charge separation, which transfers an electron from the donor P700 chlorophyll pair to the spectroscopically characterized acceptors A0, A1, FX, FA and FB in turn. Oxidized P700 is reduced on the lumenal side of the thylakoid membrane by plastocyanin or cytochrome c6. The protein is Photosystem I P700 chlorophyll a apoprotein A1 of Prochlorococcus marinus subsp. pastoris (strain CCMP1986 / NIES-2087 / MED4).